We begin with the raw amino-acid sequence, 260 residues long: Thiazole synthase (260 aa).

K100 functions as the Schiff-base intermediate with DXP in the catalytic mechanism. 1-deoxy-D-xylulose 5-phosphate contacts are provided by residues G161, 187-188 (AG), and 209-210 (NT).

Belongs to the ThiG family. As to quaternary structure, homotetramer. Forms heterodimers with either ThiH or ThiS.

The protein localises to the cytoplasm. The catalysed reaction is [ThiS sulfur-carrier protein]-C-terminal-Gly-aminoethanethioate + 2-iminoacetate + 1-deoxy-D-xylulose 5-phosphate = [ThiS sulfur-carrier protein]-C-terminal Gly-Gly + 2-[(2R,5Z)-2-carboxy-4-methylthiazol-5(2H)-ylidene]ethyl phosphate + 2 H2O + H(+). Its pathway is cofactor biosynthesis; thiamine diphosphate biosynthesis. In terms of biological role, catalyzes the rearrangement of 1-deoxy-D-xylulose 5-phosphate (DXP) to produce the thiazole phosphate moiety of thiamine. Sulfur is provided by the thiocarboxylate moiety of the carrier protein ThiS. In vitro, sulfur can be provided by H(2)S. In Sorangium cellulosum (strain So ce56) (Polyangium cellulosum (strain So ce56)), this protein is Thiazole synthase.